The primary structure comprises 125 residues: UPF0102 protein PSPA7_4996 (125 aa).

Belongs to the UPF0102 family.

The sequence is that of UPF0102 protein PSPA7_4996 from Pseudomonas paraeruginosa (strain DSM 24068 / PA7) (Pseudomonas aeruginosa (strain PA7)).